Here is a 166-residue protein sequence, read N- to C-terminus: Prorelaxin H2 (166 aa).

The first 5 residues, S1 to A5, serve as a signal peptide directing secretion. Intrachain disulfides connect C16/C153, C28/C166, and C152/C157. A propeptide spans S37–S138 (connecting peptide).

The protein belongs to the insulin family. As to quaternary structure, heterodimer of a B chain and an A chain linked by two disulfide bonds. In terms of tissue distribution, expressed in the corpus luteum of pregnancy and in the placenta.

The protein resides in the secreted. Relaxin is an ovarian hormone that acts with estrogen to produce dilatation of the birth canal in many mammals. May be involved in remodeling of connective tissues during pregnancy, promoting growth of pubic ligaments and ripening of the cervix. This Pan troglodytes (Chimpanzee) protein is Prorelaxin H2 (RNL2).